Consider the following 551-residue polypeptide: Hydroxymethylpyrimidine/phosphomethylpyrimidine kinase THI21 (551 aa).

Gln-64 provides a ligand contact to 4-amino-5-hydroxymethyl-2-methylpyrimidine.

In the N-terminal section; belongs to the ThiD family. This sequence in the C-terminal section; belongs to the thiaminase-2 family.

It carries out the reaction 4-amino-5-hydroxymethyl-2-methylpyrimidine + ATP = 4-amino-2-methyl-5-(phosphooxymethyl)pyrimidine + ADP + H(+). It catalyses the reaction 4-amino-2-methyl-5-(phosphooxymethyl)pyrimidine + ATP = 4-amino-2-methyl-5-(diphosphooxymethyl)pyrimidine + ADP. The protein operates within cofactor biosynthesis; thiamine diphosphate biosynthesis; 4-amino-2-methyl-5-diphosphomethylpyrimidine from 5-amino-1-(5-phospho-D-ribosyl)imidazole: step 2/3. It participates in cofactor biosynthesis; thiamine diphosphate biosynthesis; 4-amino-2-methyl-5-diphosphomethylpyrimidine from 5-amino-1-(5-phospho-D-ribosyl)imidazole: step 3/3. Functionally, catalyzes the phosphorylation of hydroxymethylpyrimidine phosphate (HMP-P) to HMP-PP, and also probably that of HMP to HMP-P. The chain is Hydroxymethylpyrimidine/phosphomethylpyrimidine kinase THI21 (THI21) from Saccharomyces cerevisiae (strain ATCC 204508 / S288c) (Baker's yeast).